A 395-amino-acid chain; its full sequence is MSKIIAINAGSSSLKFQLFEMPSETVLTKGLVERIGIADSVFTISVNGEKNTEVTDIPDHAVAVKMLLNKLTEFGIIKDLNEIDGIGHRVVHGGEKFSDSVLLTDETIKEIEDISELAPLHNPANIVGIKAFKEVLPNVPAVAVFDTAFHQTMPEQSYLYSLPYEYYEKFGIRKYGFHGTSHKYVTERAAELLGRPLKDLRLISCHLGNGASIAAVEGGKSIDTSMGFTPLAGVAMGTRSGNIDPALIPYIMEKTGQTADEVLNTLNKKSGLLGISGFSSDLRDIVEATKEGNERAETALEVFASRIHKYIGSYAARMSGVDAIIFTAGIGENSVEVRERVLRGLEFMGVYWDPALNNVRGEEAFISYPHSPVKVMIIPTDEEVMIARDVVRLAK.

Mg(2+) is bound at residue Asn-8. Lys-15 is an ATP binding site. Substrate is bound at residue Arg-89. Asp-146 acts as the Proton donor/acceptor in catalysis. Residues 206–210, 281–283, and 329–333 each bind ATP; these read HLGNG, DLR, and GIGEN. Position 382 (Glu-382) interacts with Mg(2+).

The protein belongs to the acetokinase family. As to quaternary structure, homodimer. The cofactor is Mg(2+). It depends on Mn(2+) as a cofactor.

The protein resides in the cytoplasm. The enzyme catalyses acetate + ATP = acetyl phosphate + ADP. The protein operates within metabolic intermediate biosynthesis; acetyl-CoA biosynthesis; acetyl-CoA from acetate: step 1/2. Induced by glucose excess, the induction may be mediated by CcpA transcriptional regulator. In terms of biological role, catalyzes the formation of acetyl phosphate from acetate and ATP. Can also catalyze the reverse reaction. Appears to favor the formation of acetate. Involved in the secretion of excess carbohydrate. The sequence is that of Acetate kinase from Bacillus subtilis (strain 168).